Here is a 286-residue protein sequence, read N- to C-terminus: 4-diphosphocytidyl-2-C-methyl-D-erythritol kinase (286 aa).

Lys-11 is an active-site residue. 93 to 103 serves as a coordination point for ATP; that stretch reads PFGAGLGGGSS. Asp-135 is a catalytic residue.

The protein belongs to the GHMP kinase family. IspE subfamily.

The catalysed reaction is 4-CDP-2-C-methyl-D-erythritol + ATP = 4-CDP-2-C-methyl-D-erythritol 2-phosphate + ADP + H(+). It participates in isoprenoid biosynthesis; isopentenyl diphosphate biosynthesis via DXP pathway; isopentenyl diphosphate from 1-deoxy-D-xylulose 5-phosphate: step 3/6. In terms of biological role, catalyzes the phosphorylation of the position 2 hydroxy group of 4-diphosphocytidyl-2C-methyl-D-erythritol. This Chlorobaculum parvum (strain DSM 263 / NCIMB 8327) (Chlorobium vibrioforme subsp. thiosulfatophilum) protein is 4-diphosphocytidyl-2-C-methyl-D-erythritol kinase.